A 508-amino-acid polypeptide reads, in one-letter code: MATDWLGSIVSINCGDSLGVYQGRVSAVDQVSQTISLTRPFHNGVKCLVPEVTFRAGDITELKILEIPGPGDNQHFGDLHQTELGPSGAGCQVGINQNGTGKFVKKPASSSSAPQNIPKRTDVKSQDVAVSPQQQQCSKSYVDRHMESLSQSKSFRRRHNSWSSSSRHPNQATPKKSGLKNGQMKNKDDECFGDDIEEIPDTDFDFEGNLALFDKAAVFEEIDTYERRSGTRSRGIPNERPTRYRHDENILESEPIVYRRIIVPHNVSKEFCTDSGLVVPSISYELHKKLLSVAEKHGLTLERRLEMTGVCASQMALTLLGGPNRLNPKNVHQRPTVALLCGPHVKGAQGISCGRHLANHDVQVILFLPNFVKMLESITNELSLFSKTQGQQVSSLKDLPTSPVDLVINCLDCPENVFLRDQPWYKAAVAWANQNRAPVLSIDPPVHEVEQGIDAKWSLALGLPLPLGEHAGRIYLCDIGIPQQVFQEVGINYHSPFGCKFVIPLHSA.

The region spanning 1-68 (MATDWLGSIV…ITELKILEIP (68 aa)) is the Sm domain. A required for P-body targeting and interaction with DCP1A region spans residues 1 to 79 (MATDWLGSIV…PGDNQHFGDL (79 aa)). Residues 95 to 192 (INQNGTGKFV…QMKNKDDECF (98 aa)) form a disordered region. A phosphoserine mark is found at serine 131, serine 138, serine 140, and serine 161. Residues 191–296 (CFGDDIEEIP…HKKLLSVAEK (106 aa)) are required for interaction with DDX6. One can recognise a DFDF domain in the interval 192–228 (FGDDIEEIPDTDFDFEGNLALFDKAAVFEEIDTYERR). Positions 283–487 (SYELHKKLLS…DIGIPQQVFQ (205 aa)) constitute a YjeF N-terminal domain.

Belongs to the EDC3 family. In terms of assembly, homodimer (via YjeF N-terminal domain). Forms a complex with DCP1A, DCP2, DDX6 and EDC4/HEDLS, within this complex directly interacts with DCP1A and DDX6. Interacts with ZFP36. Expressed in theca and granulosa cells in ovary, and in spermatids of the meiotic division part II and apical membrane of Sertoli cells in testis (at protein level). Also expressed in brain and mammary gland.

The protein localises to the cytoplasm. The protein resides in the P-body. In terms of biological role, binds single-stranded RNA. Involved in the process of mRNA degradation and in the positive regulation of mRNA decapping. May play a role in spermiogenesis and oogenesis. The protein is Enhancer of mRNA-decapping protein 3 (EDC3) of Homo sapiens (Human).